We begin with the raw amino-acid sequence, 156 residues long: Small ribosomal subunit protein uS7 (156 aa).

This sequence belongs to the universal ribosomal protein uS7 family. Part of the 30S ribosomal subunit. Contacts proteins S9 and S11.

In terms of biological role, one of the primary rRNA binding proteins, it binds directly to 16S rRNA where it nucleates assembly of the head domain of the 30S subunit. Is located at the subunit interface close to the decoding center, probably blocks exit of the E-site tRNA. This is Small ribosomal subunit protein uS7 from Allorhizobium ampelinum (strain ATCC BAA-846 / DSM 112012 / S4) (Agrobacterium vitis (strain S4)).